A 329-amino-acid polypeptide reads, in one-letter code: Probable nicotianamine synthase 7 (329 aa).

This sequence belongs to the nicotianamine synthase (NAS)-like family.

The enzyme catalyses 3 S-adenosyl-L-methionine = nicotianamine + 3 S-methyl-5'-thioadenosine + 3 H(+). Functionally, synthesizes nicotianamine, a polyamine that is the first intermediate in the synthesis of the phytosiderophores of the mugineic acid type found in gramineae which serves as a sensor for the physiological iron status within the plant, and/or might be involved in the transport of iron. This Hordeum vulgare (Barley) protein is Probable nicotianamine synthase 7 (NAS7).